A 162-amino-acid chain; its full sequence is uncharacterized protein (162 aa).

The region spanning 78–154 (KNLVVVDIGA…KAIKNLHYVG (77 aa)) is the PUA domain.

This is an uncharacterized protein from Methanocaldococcus jannaschii (strain ATCC 43067 / DSM 2661 / JAL-1 / JCM 10045 / NBRC 100440) (Methanococcus jannaschii).